The sequence spans 260 residues: Proliferating cell nuclear antigen (260 aa).

The DNA-binding element occupies 61-80 (RCDRNISMGMNLGSMAKILK).

Belongs to the PCNA family. In terms of assembly, homotrimer. Forms a complex with activator 1 heteropentamer in the presence of ATP.

It is found in the nucleus. In terms of biological role, this protein is an auxiliary protein of DNA polymerase delta and is involved in the control of eukaryotic DNA replication by increasing the polymerase's processibility during elongation of the leading strand. The chain is Proliferating cell nuclear antigen (PCNA) from Sarcophaga crassipalpis (Flesh fly).